Reading from the N-terminus, the 228-residue chain is Cytidylate kinase (228 aa).

ATP is bound at residue 17–25 (GPTASGKGT).

This sequence belongs to the cytidylate kinase family. Type 1 subfamily.

It is found in the cytoplasm. The enzyme catalyses CMP + ATP = CDP + ADP. It catalyses the reaction dCMP + ATP = dCDP + ADP. The polypeptide is Cytidylate kinase (Paraburkholderia phymatum (strain DSM 17167 / CIP 108236 / LMG 21445 / STM815) (Burkholderia phymatum)).